Consider the following 377-residue polypeptide: 4-hydroxy-3-methylbut-2-en-1-yl diphosphate synthase (flavodoxin) (377 aa).

4 residues coordinate [4Fe-4S] cluster: cysteine 275, cysteine 278, cysteine 310, and glutamate 317.

This sequence belongs to the IspG family. [4Fe-4S] cluster is required as a cofactor.

The catalysed reaction is (2E)-4-hydroxy-3-methylbut-2-enyl diphosphate + oxidized [flavodoxin] + H2O + 2 H(+) = 2-C-methyl-D-erythritol 2,4-cyclic diphosphate + reduced [flavodoxin]. It participates in isoprenoid biosynthesis; isopentenyl diphosphate biosynthesis via DXP pathway; isopentenyl diphosphate from 1-deoxy-D-xylulose 5-phosphate: step 5/6. Functionally, converts 2C-methyl-D-erythritol 2,4-cyclodiphosphate (ME-2,4cPP) into 1-hydroxy-2-methyl-2-(E)-butenyl 4-diphosphate. The sequence is that of 4-hydroxy-3-methylbut-2-en-1-yl diphosphate synthase (flavodoxin) from Jannaschia sp. (strain CCS1).